The following is a 342-amino-acid chain: Probable dual-specificity RNA methyltransferase RlmN (342 aa).

Glutamate 91 functions as the Proton acceptor in the catalytic mechanism. The region spanning 97-327 (YRYGNTVCLS…VTVRRELGDE (231 aa)) is the Radical SAM core domain. A disulfide bridge links cysteine 104 with cysteine 332. [4Fe-4S] cluster-binding residues include cysteine 111, cysteine 115, and cysteine 118. S-adenosyl-L-methionine contacts are provided by residues 158–159 (GE), serine 190, 213–215 (SLH), and asparagine 289. The active-site S-methylcysteine intermediate is the cysteine 332.

The protein belongs to the radical SAM superfamily. RlmN family. [4Fe-4S] cluster is required as a cofactor.

It localises to the cytoplasm. The catalysed reaction is adenosine(2503) in 23S rRNA + 2 reduced [2Fe-2S]-[ferredoxin] + 2 S-adenosyl-L-methionine = 2-methyladenosine(2503) in 23S rRNA + 5'-deoxyadenosine + L-methionine + 2 oxidized [2Fe-2S]-[ferredoxin] + S-adenosyl-L-homocysteine. It carries out the reaction adenosine(37) in tRNA + 2 reduced [2Fe-2S]-[ferredoxin] + 2 S-adenosyl-L-methionine = 2-methyladenosine(37) in tRNA + 5'-deoxyadenosine + L-methionine + 2 oxidized [2Fe-2S]-[ferredoxin] + S-adenosyl-L-homocysteine. Its function is as follows. Specifically methylates position 2 of adenine 2503 in 23S rRNA and position 2 of adenine 37 in tRNAs. The protein is Probable dual-specificity RNA methyltransferase RlmN of Carboxydothermus hydrogenoformans (strain ATCC BAA-161 / DSM 6008 / Z-2901).